Here is a 277-residue protein sequence, read N- to C-terminus: Carbonyl reductase [NADPH] 3 (277 aa).

Serine 2 carries the N-acetylserine modification. NADP(+)-binding positions include 10 to 34 (VTGA…GDVV), 38 to 42 (RDVAR), 63 to 64 (DI), and asparagine 90. Residue serine 30 is modified to Phosphoserine. Serine 140 is a substrate binding site. Tyrosine 194 serves as the catalytic Proton acceptor. Residues 194 to 198 (YGVSK) and aspartate 239 contribute to the NADP(+) site.

The protein belongs to the short-chain dehydrogenases/reductases (SDR) family. In terms of tissue distribution, detected in ovary, pancreas, intestine, colon, kidney, brain, thymus, lung, heart, liver, spleen, leukocyte, prostate and testis.

Its subcellular location is the cytoplasm. The catalysed reaction is a secondary alcohol + NADP(+) = a ketone + NADPH + H(+). It carries out the reaction a quinone + NADPH + H(+) = a quinol + NADP(+). Catalyzes the NADPH-dependent reduction of carbonyl compounds to their corresponding alcohols. Has low NADPH-dependent oxidoreductase activity. Acts on several orthoquinones, acts as well on non-quinone compounds, such as isatin or on the anticancer drug oracin. Best substrates for CBR3 is 1,2- naphthoquinone, hence could play a role in protection against cytotoxicity of exogenous quinones. Exerts activity toward ortho-quinones but not paraquinones. No endogenous substrate for CBR3 except isatin has been identified. This chain is Carbonyl reductase [NADPH] 3, found in Homo sapiens (Human).